Consider the following 252-residue polypeptide: Imidazole glycerol phosphate synthase subunit HisF (252 aa).

Catalysis depends on residues Asp11 and Asp130.

This sequence belongs to the HisA/HisF family. Heterodimer of HisH and HisF.

It is found in the cytoplasm. It carries out the reaction 5-[(5-phospho-1-deoxy-D-ribulos-1-ylimino)methylamino]-1-(5-phospho-beta-D-ribosyl)imidazole-4-carboxamide + L-glutamine = D-erythro-1-(imidazol-4-yl)glycerol 3-phosphate + 5-amino-1-(5-phospho-beta-D-ribosyl)imidazole-4-carboxamide + L-glutamate + H(+). It functions in the pathway amino-acid biosynthesis; L-histidine biosynthesis; L-histidine from 5-phospho-alpha-D-ribose 1-diphosphate: step 5/9. IGPS catalyzes the conversion of PRFAR and glutamine to IGP, AICAR and glutamate. The HisF subunit catalyzes the cyclization activity that produces IGP and AICAR from PRFAR using the ammonia provided by the HisH subunit. In Staphylococcus epidermidis (strain ATCC 35984 / DSM 28319 / BCRC 17069 / CCUG 31568 / BM 3577 / RP62A), this protein is Imidazole glycerol phosphate synthase subunit HisF.